The chain runs to 400 residues: Betaine--homocysteine S-methyltransferase 1 (400 aa).

In terms of domain architecture, Hcy-binding spans 8–309 (RGVLERLNAG…YHIRAVAEEL (302 aa)). 3 residues coordinate Zn(2+): C212, C294, and C295.

As to quaternary structure, homotetramer. Requires Zn(2+) as cofactor.

The protein resides in the cytoplasm. The enzyme catalyses L-homocysteine + glycine betaine = N,N-dimethylglycine + L-methionine. It participates in amine and polyamine degradation; betaine degradation; sarcosine from betaine: step 1/2. Its pathway is amino-acid biosynthesis; L-methionine biosynthesis via de novo pathway; L-methionine from L-homocysteine (BhmT route): step 1/1. Functionally, involved in the regulation of homocysteine metabolism. Converts betaine and homocysteine to dimethylglycine and methionine, respectively. This reaction is also required for the irreversible oxidation of choline. The protein is Betaine--homocysteine S-methyltransferase 1 (bhmt) of Danio rerio (Zebrafish).